Reading from the N-terminus, the 230-residue chain is Probable methylthioribulose-1-phosphate dehydratase (230 aa).

Cys87 contributes to the substrate binding site. The Zn(2+) site is built by His105 and His107. The Proton donor/acceptor role is filled by Glu129. A Zn(2+)-binding site is contributed by His185.

It belongs to the aldolase class II family. MtnB subfamily. Zn(2+) is required as a cofactor.

The protein localises to the cytoplasm. The enzyme catalyses 5-(methylsulfanyl)-D-ribulose 1-phosphate = 5-methylsulfanyl-2,3-dioxopentyl phosphate + H2O. It participates in amino-acid biosynthesis; L-methionine biosynthesis via salvage pathway; L-methionine from S-methyl-5-thio-alpha-D-ribose 1-phosphate: step 2/6. Its function is as follows. Catalyzes the dehydration of methylthioribulose-1-phosphate (MTRu-1-P) into 2,3-diketo-5-methylthiopentyl-1-phosphate (DK-MTP-1-P). The chain is Probable methylthioribulose-1-phosphate dehydratase from Drosophila grimshawi (Hawaiian fruit fly).